A 215-amino-acid chain; its full sequence is Adenylate kinase (215 aa).

Residue 10 to 15 participates in ATP binding; it reads GAGKGT. Residues 30 to 59 are NMP; it reads STGDMLRAAIKAGTPLGLEAKKIIDEGGLV. AMP contacts are provided by residues T31, R36, 57–59, 85–88, and Q92; these read GLV and GFPR. An LID region spans residues 122 to 159; sequence GRRVHLASGRTYHVTYNPPKTEGKDDVTGEDLIQRDDD. Residues R123 and 132–133 contribute to the ATP site; that span reads TY. 2 residues coordinate AMP: R156 and R167. ATP is bound at residue Q200.

The protein belongs to the adenylate kinase family. As to quaternary structure, monomer.

It localises to the cytoplasm. It carries out the reaction AMP + ATP = 2 ADP. The protein operates within purine metabolism; AMP biosynthesis via salvage pathway; AMP from ADP: step 1/1. Catalyzes the reversible transfer of the terminal phosphate group between ATP and AMP. Plays an important role in cellular energy homeostasis and in adenine nucleotide metabolism. The chain is Adenylate kinase from Neisseria gonorrhoeae (strain ATCC 700825 / FA 1090).